Reading from the N-terminus, the 441-residue chain is SVGFKAGVKDYKLTYYTPAYQTKDTDILAAFRVSPQPGVPPEEAGAAVAAESSTGTWTTVWTDGLTSLDRYKGRCYYIEPVAGEENQYIAYVAYPLDLFEEGSVTNMFTSIVGNVFGFKALRALRLEDLRIPTAYVKTFQGPPHGIQVERDKLNKYGRPLLGCTIKPKLGLSAKNYGRAVYECLRGGLDFTKDDENVNSQPFMRWRDRFVFCAEALYKAQAETGEIKGHYLNATAGTCEEMNKRAVFARELGVPIIMHDYLTGGFTANTSLAHYCRDNGLLLHIHRAMHAVIDRQKNHGIHFRVLAKALRMSGGDHIHSGTVVGKLEGEREITLGFVDLLRDDYIEKDRDRGIYFTQDWVSLPGVLPVASGGIHVWHMPALTEIFGDDSVLQFGGGTLGHPWGNAPGGVANRVALEACVQARNEGRDLAREGNEIIREASK.

Lys-5 is modified (N6,N6,N6-trimethyllysine). The substrate site is built by Asn-114 and Thr-164. Catalysis depends on Lys-166, which acts as the Proton acceptor. Lys-168 provides a ligand contact to substrate. Residues Lys-192, Asp-194, and Glu-195 each coordinate Mg(2+). Lys-192 is modified (N6-carboxylysine). His-285 serves as the catalytic Proton acceptor. Substrate is bound by residues Arg-286, His-318, and Ser-370.

It belongs to the RuBisCO large chain family. Type I subfamily. Heterohexadecamer of 8 large chains and 8 small chains; disulfide-linked. The disulfide link is formed within the large subunit homodimers. It depends on Mg(2+) as a cofactor. In terms of processing, the disulfide bond which can form in the large chain dimeric partners within the hexadecamer appears to be associated with oxidative stress and protein turnover.

Its subcellular location is the plastid. The protein localises to the chloroplast. The enzyme catalyses 2 (2R)-3-phosphoglycerate + 2 H(+) = D-ribulose 1,5-bisphosphate + CO2 + H2O. The catalysed reaction is D-ribulose 1,5-bisphosphate + O2 = 2-phosphoglycolate + (2R)-3-phosphoglycerate + 2 H(+). RuBisCO catalyzes two reactions: the carboxylation of D-ribulose 1,5-bisphosphate, the primary event in carbon dioxide fixation, as well as the oxidative fragmentation of the pentose substrate in the photorespiration process. Both reactions occur simultaneously and in competition at the same active site. This chain is Ribulose bisphosphate carboxylase large chain, found in Begonia metallica x Begonia sanguinea.